The chain runs to 420 residues: Caspase-12 (420 aa).

A CARD domain is found at 1–92 (MAAKRTHERD…QLSLQFPSDD (92 aa)). A phosphoserine mark is found at Ser-85 and Ser-90. The segment at 93-115 (EEDELQKMFTPSSASESRGKVED) is disordered. Catalysis depends on residues His-251 and Cys-299.

It belongs to the peptidase C14A family. In terms of assembly, heterotetramer that consists of two anti-parallel arranged heterodimers, each one formed by two subunits (Potential). May interact with TRAF2.

Its function is as follows. Involved in the activation cascade of caspases responsible for apoptosis execution. This chain is Caspase-12 (Casp12), found in Rattus norvegicus (Rat).